We begin with the raw amino-acid sequence, 311 residues long: Probable manganese-dependent inorganic pyrophosphatase (311 aa).

Mn(2+) contacts are provided by H9, D13, D15, D75, H97, and D149.

The protein belongs to the PPase class C family. Mn(2+) is required as a cofactor.

It is found in the cytoplasm. The enzyme catalyses diphosphate + H2O = 2 phosphate + H(+). In Lactobacillus gasseri (strain ATCC 33323 / DSM 20243 / BCRC 14619 / CIP 102991 / JCM 1131 / KCTC 3163 / NCIMB 11718 / NCTC 13722 / AM63), this protein is Probable manganese-dependent inorganic pyrophosphatase.